The chain runs to 525 residues: MTTNIHDQRILILDFGSQYTQLIARRVREIGVYCELWAWDVTEEQIREFNPQGIILSGGPESVTEEGSPRAPDYVFEAGVPVLGVCYGMQTMAHQLGGGVLGSDKREFGYAQVEVIKPSPLLDKIEDAIGDNGAALLDVWMSHGDKVAAIPEGFETIAQTASCPHAAMYNEEKQFYGVQFHPEVTHTRQGMRLLTQFVMDICKCEKLWTAGAIIEDAIERIKEKVGDERVILGLSGGVDSSVTAMLLHRAIGKNLTCVFVDNGLLRLNEADQVMEMFGDHFGLNIIRVDAEGRFLDRLKGIEDPELKRKAIGNEFVRVFDEEASKLENAKWLAQGTIYPDVIESAGSATGKAHVIKSHHNVGGLPEDMELGLVEPLRELFKDEVRKIGLELGLPYDMLYRHPFPGPGLGVRVLGEIKKEYCDLLRRADAIFIEELYAADLYQKVSQAFTVFLPVRSVGVMGDARKYDWVVSLRAVETIDFMTAHWAHLPYDFLGKVSNRIINEIDGISRVVYDISGKPPATIEWE.

Residues 9–207 form the Glutamine amidotransferase type-1 domain; it reads RILILDFGSQ…VMDICKCEKL (199 aa). Residue Cys86 is the Nucleophile of the active site. Active-site residues include His181 and Glu183. The region spanning 208-400 is the GMPS ATP-PPase domain; the sequence is WTAGAIIEDA…LGLPYDMLYR (193 aa). 235–241 is an ATP binding site; it reads SGGVDSS.

As to quaternary structure, homodimer.

The enzyme catalyses XMP + L-glutamine + ATP + H2O = GMP + L-glutamate + AMP + diphosphate + 2 H(+). Its pathway is purine metabolism; GMP biosynthesis; GMP from XMP (L-Gln route): step 1/1. In terms of biological role, catalyzes the synthesis of GMP from XMP. This Alteromonas mediterranea (strain DSM 17117 / CIP 110805 / LMG 28347 / Deep ecotype) protein is GMP synthase [glutamine-hydrolyzing].